A 222-amino-acid polypeptide reads, in one-letter code: MESTLELTKIKEVLQKNLKILIILPLLFLIISAIVTFFVLSPKYQANTQILVNQTKGDNPQFMAQEVQSNIQLVNTYKEIVKSPRILDEVSKDLNNKYSPSKLSSMLTITNQENTQLINIQVKSGHKQDSEKIANSFAKVTSKQIPKIMSLDNVSILSKADGTAVKVAPKTVVNLIGAFFLGLVVALIYIFFKVIFDKRIKDEEDVEKELGLPVLGSIQKFN.

2 helical membrane passes run 20–40 (ILII…FFVL) and 172–192 (VVNL…YIFF).

This sequence belongs to the CpsC/CapA family.

The protein localises to the cell membrane. Its function is as follows. Required for the biosynthesis of type 8 capsular polysaccharide (Cap8/CP8). Might act as the chain-length regulator. The polypeptide is Capsular polysaccharide type 8 biosynthesis protein cap8A (cap8A) (Staphylococcus aureus).